A 39-amino-acid chain; its full sequence is Natriuretic peptide CnNP-b (39 aa).

Positions 1–8 (SGSKTATK) are excised as a propeptide. Residues Cys12 and Cys28 are joined by a disulfide bond. Residues 20–39 (IGSTSGMGCGGVPKPTPGGS) are disordered.

It belongs to the natriuretic peptide family. In terms of tissue distribution, expressed by the venom gland.

The protein resides in the secreted. Its function is as follows. Snake venom natriuretic peptide that targets both NPR1 and NPR2. Exhibits hypotensive and vasodepressor activities. This is Natriuretic peptide CnNP-b from Cryptophis nigrescens (Eastern small-eyed snake).